A 158-amino-acid chain; its full sequence is 6,7-dimethyl-8-ribityllumazine synthase 2 (158 aa).

5-amino-6-(D-ribitylamino)uracil contacts are provided by residues Trp-20, 54-56 (AYE), and 78-80 (FVI). The active-site Proton donor is Arg-86. Ser-111 is a 5-amino-6-(D-ribitylamino)uracil binding site. (2S)-2-hydroxy-3-oxobutyl phosphate is bound at residue His-125.

Belongs to the DMRL synthase family. In terms of assembly, homodecamer, arranged as a dimer of pentamers.

Its subcellular location is the cytoplasm. The catalysed reaction is (2S)-2-hydroxy-3-oxobutyl phosphate + 5-amino-6-(D-ribitylamino)uracil = 6,7-dimethyl-8-(1-D-ribityl)lumazine + phosphate + 2 H2O + H(+). The protein operates within cofactor biosynthesis; riboflavin biosynthesis; riboflavin from 2-hydroxy-3-oxobutyl phosphate and 5-amino-6-(D-ribitylamino)uracil: step 1/2. Functionally, catalyzes the formation of 6,7-dimethyl-8-ribityllumazine by condensation of 5-amino-6-(D-ribitylamino)uracil with 3,4-dihydroxy-2-butanone 4-phosphate. This is the penultimate step in the biosynthesis of riboflavin. The isozyme RibH2 but not RibH1 is essential for Brucella intracellular survival and replication inside macrophages or in mice. Displays low catalytic activity in comparison with the isozyme RibH1. Is a highly immunogenic protein. Activates dendritic cells (DCs) in vitro, increasing the levels of costimulatory molecules and the secretion of pro-inflammatory cytokines, and recruits DCs, B cells and CD8+ T cells in vivo, both effects in a TLR4-dependent manner. Induces the cross presentation of covalently attached peptides and generates a strong and long-lasting humoral immune response without adjuvants; TLR4 signaling is necessary for the induction of the cytotoxic response but not for antigen cross presentation. Elicits a TLR4-mediated protective response against B16 melanoma in mice, slowing tumor growth and prolonging mice survival. The chain is 6,7-dimethyl-8-ribityllumazine synthase 2 from Brucella abortus (strain 2308).